The sequence spans 605 residues: Putative glutaminase 2 (605 aa).

Substrate contacts are provided by Ser213, Asn262, Glu308, Asn315, Tyr342, Tyr394, and Val412. ANK repeat units follow at residues 480–509 and 513–543; these read DRLI…DLNT and DDRT…DVDK. Over residues 569–581 the composition is skewed to basic and acidic residues; it reads KAMKRPEQHRKDS. The segment at 569–605 is disordered; sequence KAMKRPEQHRKDSVSSLDTDDEIDDDGFPEKPSFTID. A compositionally biased stretch (acidic residues) spans 586–595; it reads DTDDEIDDDG.

The protein belongs to the glutaminase family.

The catalysed reaction is L-glutamine + H2O = L-glutamate + NH4(+). The chain is Putative glutaminase 2 (glna-2) from Caenorhabditis elegans.